The sequence spans 320 residues: Ferrochelatase (320 aa).

Fe cation-binding residues include histidine 194 and glutamate 275.

It belongs to the ferrochelatase family. In terms of assembly, monomer.

Its subcellular location is the cytoplasm. The enzyme catalyses heme b + 2 H(+) = protoporphyrin IX + Fe(2+). It functions in the pathway porphyrin-containing compound metabolism; protoheme biosynthesis; protoheme from protoporphyrin-IX: step 1/1. Catalyzes the ferrous insertion into protoporphyrin IX. This is Ferrochelatase from Escherichia coli O139:H28 (strain E24377A / ETEC).